The sequence spans 456 residues: Glutamate--tRNA ligase 2 (456 aa).

The 'HIGH' region motif lies at 8 to 18; that stretch reads PSPTGYIHIGN. A 'KMSKS' region motif is present at residues 249–253; the sequence is GLSKR. Residue lysine 252 participates in ATP binding.

This sequence belongs to the class-I aminoacyl-tRNA synthetase family. Glutamate--tRNA ligase type 1 subfamily. Monomer.

It is found in the cytoplasm. The enzyme catalyses tRNA(Glu) + L-glutamate + ATP = L-glutamyl-tRNA(Glu) + AMP + diphosphate. Functionally, catalyzes the attachment of glutamate to tRNA(Glu) in a two-step reaction: glutamate is first activated by ATP to form Glu-AMP and then transferred to the acceptor end of tRNA(Glu). The chain is Glutamate--tRNA ligase 2 from Bartonella bacilliformis (strain ATCC 35685 / KC583 / Herrer 020/F12,63).